The following is a 458-amino-acid chain: UDP-N-acetylmuramoylalanine--D-glutamate ligase (458 aa).

124–130 (GSDGKTT) is a binding site for ATP.

This sequence belongs to the MurCDEF family.

It is found in the cytoplasm. The catalysed reaction is UDP-N-acetyl-alpha-D-muramoyl-L-alanine + D-glutamate + ATP = UDP-N-acetyl-alpha-D-muramoyl-L-alanyl-D-glutamate + ADP + phosphate + H(+). It functions in the pathway cell wall biogenesis; peptidoglycan biosynthesis. Functionally, cell wall formation. Catalyzes the addition of glutamate to the nucleotide precursor UDP-N-acetylmuramoyl-L-alanine (UMA). The sequence is that of UDP-N-acetylmuramoylalanine--D-glutamate ligase from Clostridium botulinum (strain 657 / Type Ba4).